A 101-amino-acid chain; its full sequence is Feather keratin Cos2-3 (101 aa).

Residue S2 is modified to N-acetylserine.

It belongs to the avian keratin family. As to quaternary structure, the avian keratins (F-ker, S-ker, C-ker and B-ker) are a complex mixture of very similar polypeptides.

This chain is Feather keratin Cos2-3, found in Columba livia (Rock dove).